Consider the following 140-residue polypeptide: ATP synthase epsilon chain (140 aa).

It belongs to the ATPase epsilon chain family. As to quaternary structure, F-type ATPases have 2 components, CF(1) - the catalytic core - and CF(0) - the membrane proton channel. CF(1) has five subunits: alpha(3), beta(3), gamma(1), delta(1), epsilon(1). CF(0) has three main subunits: a, b and c.

The protein resides in the cell inner membrane. Its function is as follows. Produces ATP from ADP in the presence of a proton gradient across the membrane. This Marinobacter nauticus (strain ATCC 700491 / DSM 11845 / VT8) (Marinobacter aquaeolei) protein is ATP synthase epsilon chain.